The following is a 201-amino-acid chain: uncharacterized protein (201 aa).

This is an uncharacterized protein from Acanthamoeba polyphaga mimivirus (APMV).